Consider the following 266-residue polypeptide: Killer cell lectin-like receptor 3 (266 aa).

Residues 1–48 lie on the Cytoplasmic side of the membrane; it reads MSEPEVTYSTVRLHKSSGLQKLVRHEETQGPREVGNRKCSAPWQLIVK. A helical; Signal-anchor for type II membrane protein transmembrane segment spans residues 49 to 69; that stretch reads ALGILCFLLLVTVAVLAVKIF. Residues 70–266 are Extracellular-facing; it reads QYNQHKQEIN…CGKKLDKFPD (197 aa). N-linked (GlcNAc...) asparagine glycans are attached at residues N79, N87, N104, and N113. Residues 147–151 are involved in dimerization; it reads WFCYS. The cysteines at positions 149 and 154 are disulfide-linked. The C-type lectin domain maps to 150–258; that stretch reads YSTKCYYFIM…CNIPYYCICG (109 aa). N-linked (GlcNAc...) asparagine glycosylation is present at N160. 5 implicated in MHC class I binding regions span residues 160-162, 195-196, 207-208, 224-233, and 240-245; these read NKT, IP, KK, MKIRKMNFKS, and SKARIE. Intrachain disulfides connect C167-C255, C171-C257, and C236-C249.

As to quaternary structure, homodimer; disulfide-linked.

The protein localises to the membrane. Its function is as follows. Receptor on natural killer (NK) cells for class I MHC. The protein is Killer cell lectin-like receptor 3 (Klra3) of Mus musculus (Mouse).